The following is a 190-amino-acid chain: Dual specificity protein phosphatase 21 (190 aa).

The region spanning 21 to 162 is the Tyrosine-protein phosphatase domain; sequence SFSQITRSLF…LINYEFKLFN (142 aa). A sufficient for mitochondrial localization region spans residues 43 to 128; sequence LSSNRITAIV…AYLMKYHSMS (86 aa). Catalysis depends on Cys106, which acts as the Phosphocysteine intermediate.

This sequence belongs to the protein-tyrosine phosphatase family. Non-receptor class dual specificity subfamily. Microtubule inner protein component of sperm flagellar doublet microtubules. In terms of tissue distribution, expressed in testis.

It localises to the cytoplasm. The protein localises to the nucleus. Its subcellular location is the mitochondrion inner membrane. The protein resides in the cytoskeleton. It is found in the flagellum axoneme. The enzyme catalyses O-phospho-L-tyrosyl-[protein] + H2O = L-tyrosyl-[protein] + phosphate. The catalysed reaction is O-phospho-L-seryl-[protein] + H2O = L-seryl-[protein] + phosphate. It carries out the reaction O-phospho-L-threonyl-[protein] + H2O = L-threonyl-[protein] + phosphate. In terms of biological role, protein phosphatase component of the sperm flagellar doublet microtubules. May act as a regulator of sperm motility by mediating dephosphorylation of sperm doublet microtubule proteins. Can dephosphorylate single and diphosphorylated synthetic MAPK peptides, with preference for the phosphotyrosine and diphosphorylated forms over phosphothreonine. This chain is Dual specificity protein phosphatase 21 (DUSP21), found in Homo sapiens (Human).